A 370-amino-acid chain; its full sequence is Chaperone protein DnaJ (370 aa).

Positions 6–70 (DYYEVLGVQR…EKRSMYDRFG (65 aa)) constitute a J domain. A CR-type zinc finger spans residues 128 to 208 (GVEKTIEYRR…CRGEGRIRQT (81 aa)). Positions 141, 144, 158, 161, 182, 185, 196, and 199 each coordinate Zn(2+). CXXCXGXG motif repeat units lie at residues 141-148 (CPACRGSG), 158-165 (CPKCGGLG), 182-189 (CDMCRGEG), and 196-203 (CRECRGEG).

Belongs to the DnaJ family. As to quaternary structure, homodimer. Requires Zn(2+) as cofactor.

The protein localises to the cytoplasm. Its function is as follows. Participates actively in the response to hyperosmotic and heat shock by preventing the aggregation of stress-denatured proteins and by disaggregating proteins, also in an autonomous, DnaK-independent fashion. Unfolded proteins bind initially to DnaJ; upon interaction with the DnaJ-bound protein, DnaK hydrolyzes its bound ATP, resulting in the formation of a stable complex. GrpE releases ADP from DnaK; ATP binding to DnaK triggers the release of the substrate protein, thus completing the reaction cycle. Several rounds of ATP-dependent interactions between DnaJ, DnaK and GrpE are required for fully efficient folding. Also involved, together with DnaK and GrpE, in the DNA replication of plasmids through activation of initiation proteins. This Roseiflexus castenholzii (strain DSM 13941 / HLO8) protein is Chaperone protein DnaJ.